A 498-amino-acid chain; its full sequence is Ribulose bisphosphate carboxylase large chain (498 aa).

Positions Met1–Ser2 are excised as a propeptide. Pro3 carries the N-acetylproline modification. Lys14 is subject to N6,N6,N6-trimethyllysine. Substrate-binding residues include Asn123 and Thr173. The Proton acceptor role is filled by Lys175. Lys177 serves as a coordination point for substrate. Residues Lys201, Asp203, and Glu204 each contribute to the Mg(2+) site. At Lys201 the chain carries N6-carboxylysine. The active-site Proton acceptor is the His294. Residues Arg295, His327, and Ser379 each coordinate substrate. Positions Pro471–Gly498 are disordered.

The protein belongs to the RuBisCO large chain family. Type I subfamily. As to quaternary structure, heterohexadecamer of 8 large chains and 8 small chains; disulfide-linked. The disulfide link is formed within the large subunit homodimers. Requires Mg(2+) as cofactor. The disulfide bond which can form in the large chain dimeric partners within the hexadecamer appears to be associated with oxidative stress and protein turnover.

It localises to the plastid. The enzyme catalyses 2 (2R)-3-phosphoglycerate + 2 H(+) = D-ribulose 1,5-bisphosphate + CO2 + H2O. The catalysed reaction is D-ribulose 1,5-bisphosphate + O2 = 2-phosphoglycolate + (2R)-3-phosphoglycerate + 2 H(+). Its function is as follows. RuBisCO catalyzes two reactions: the carboxylation of D-ribulose 1,5-bisphosphate, the primary event in carbon dioxide fixation, as well as the oxidative fragmentation of the pentose substrate in the photorespiration process. Both reactions occur simultaneously and in competition at the same active site. The chain is Ribulose bisphosphate carboxylase large chain (rbcL) from Cuscuta reflexa (Southern Asian dodder).